The chain runs to 108 residues: ATP synthase peripheral stalk subunit F6, mitochondrial (108 aa).

The transit peptide at 1–32 (MILQRLFRFSSVIRSAVSVHLRRNIGVTAVAF) directs the protein to the mitochondrion. 2 positions are modified to N6-acetyllysine: Lys-41 and Lys-46. At Ser-65 the chain carries Phosphoserine. Position 79 is an N6-acetyllysine (Lys-79). N6-acetyllysine; alternate is present on residues Lys-94 and Lys-99. Lys-94 and Lys-99 each carry N6-succinyllysine; alternate. The residue at position 105 (Lys-105) is an N6-acetyllysine.

The protein belongs to the eukaryotic ATPase subunit F6 family. As to quaternary structure, component of the ATP synthase complex composed at least of ATP5F1A/subunit alpha, ATP5F1B/subunit beta, ATP5MC1/subunit c (homooctomer), MT-ATP6/subunit a, MT-ATP8/subunit 8, ATP5ME/subunit e, ATP5MF/subunit f, ATP5MG/subunit g, ATP5MK/subunit k, ATP5MJ/subunit j, ATP5F1C/subunit gamma, ATP5F1D/subunit delta, ATP5F1E/subunit epsilon, ATP5PF/subunit F6, ATP5PB/subunit b, ATP5PD/subunit d, ATP5PO/subunit OSCP. ATP synthase complex consists of a soluble F(1) head domain (subunits alpha(3) and beta(3)) - the catalytic core - and a membrane F(0) domain - the membrane proton channel (subunits c, a, 8, e, f, g, k and j). These two domains are linked by a central stalk (subunits gamma, delta, and epsilon) rotating inside the F1 region and a stationary peripheral stalk (subunits F6, b, d, and OSCP).

It localises to the mitochondrion. It is found in the mitochondrion inner membrane. Functionally, subunit F6, of the mitochondrial membrane ATP synthase complex (F(1)F(0) ATP synthase or Complex V) that produces ATP from ADP in the presence of a proton gradient across the membrane which is generated by electron transport complexes of the respiratory chain. ATP synthase complex consist of a soluble F(1) head domain - the catalytic core - and a membrane F(1) domain - the membrane proton channel. These two domains are linked by a central stalk rotating inside the F(1) region and a stationary peripheral stalk. During catalysis, ATP synthesis in the catalytic domain of F(1) is coupled via a rotary mechanism of the central stalk subunits to proton translocation. In vivo, can only synthesize ATP although its ATP hydrolase activity can be activated artificially in vitro. Part of the complex F(0) domain. Part of the complex F(0) domain and the peripheric stalk, which acts as a stator to hold the catalytic alpha(3)beta(3) subcomplex and subunit a/ATP6 static relative to the rotary elements. This Homo sapiens (Human) protein is ATP synthase peripheral stalk subunit F6, mitochondrial.